The sequence spans 225 residues: Uracil-DNA glycosylase (225 aa).

Asp-65 acts as the Proton acceptor in catalysis.

Belongs to the uracil-DNA glycosylase (UDG) superfamily. UNG family.

The protein localises to the cytoplasm. It catalyses the reaction Hydrolyzes single-stranded DNA or mismatched double-stranded DNA and polynucleotides, releasing free uracil.. Excises uracil residues from the DNA which can arise as a result of misincorporation of dUMP residues by DNA polymerase or due to deamination of cytosine. The polypeptide is Uracil-DNA glycosylase (Clostridium beijerinckii (strain ATCC 51743 / NCIMB 8052) (Clostridium acetobutylicum)).